The primary structure comprises 202 residues: uncharacterized protein (202 aa).

The signal sequence occupies residues 1–19 (MRRKNGFSVASVFILCSIA). The helical transmembrane segment at 177–199 (FLASSSSSFSSFLPSIAIILFFV) threads the bilayer.

The protein resides in the membrane. This is an uncharacterized protein from Caenorhabditis elegans.